We begin with the raw amino-acid sequence, 827 residues long: Polyhomeotic-like protein 2 (827 aa).

Disordered stretches follow at residues 1 to 78 (MEKE…QYLQ), 282 to 316 (GLGA…SDLT), and 482 to 545 (QEPT…PPQA). Positions 9 to 38 (SVASSASVTIPSTTSVSTSTSAGTLSNSSS) are enriched in low complexity. The span at 485-498 (TRTELRQSDKESQV) shows a compositional bias: basic and acidic residues. Polar residues predominate over residues 517 to 538 (AMTSGSGNNAPTVTGSAPQNGE). Positions 540-570 (KPPPQAVVKPQILTHVIEGFVIQEGAEPFPV) match the HD1 motif. The segment at 609–643 (NNQPEPVRTCEFCGNVDFAFNFKRSKRFCSTVCAK) adopts an FCS-type zinc-finger fold. Zn(2+) contacts are provided by C618, C621, C637, and C641. Residues 653-730 (MGLFPGKSSP…EPISPLSNSS (78 aa)) are disordered. A compositionally biased stretch (basic and acidic residues) spans 661–675 (SPEDTKKPKASDESP). Composition is skewed to polar residues over residues 687–696 (PSIQTTTGAS) and 708–717 (GESSQCSDMS). One can recognise an SAM domain in the interval 763–827 (WNVEDVYEFI…FARISMLKDS (65 aa)).

In terms of assembly, component of a PRC1-like complex. In terms of tissue distribution, isoform 1 expression is stronger at the posterior border than in the anterior region within individual somites; On the contrary, isoform 2 expression is higher at the posterior border.

The protein localises to the nucleus. Its function is as follows. Component of a Polycomb group (PcG) multiprotein PRC1-like complex, a complex class required to maintain the transcriptionally repressive state of many genes, including Hox genes, throughout development. PcG PRC1 complex acts via chromatin remodeling and modification of histones; it mediates monoubiquitination of histone H2A 'Lys-119', rendering chromatin heritably changed in its expressibility. This chain is Polyhomeotic-like protein 2 (phc2), found in Danio rerio (Zebrafish).